Consider the following 1156-residue polypeptide: Pesticidal crystal protein Cry9Aa (1156 aa).

Positions 1–23 (MNQNKHGIIGASNCGCASDDVAK) are cleaved as a propeptide — removed in mature form.

The protein belongs to the delta endotoxin family.

Promotes colloidosmotic lysis by binding to the midgut epithelial cells of insects. This protein is toxic to Galleria mellonella. This chain is Pesticidal crystal protein Cry9Aa (cry9Aa), found in Bacillus thuringiensis subsp. galleriae.